A 445-amino-acid chain; its full sequence is tRNA modification GTPase MnmE (445 aa).

Arg-20, Glu-79, and Lys-119 together coordinate (6S)-5-formyl-5,6,7,8-tetrahydrofolate. In terms of domain architecture, TrmE-type G spans Gly-215–Glu-371. Asn-225 serves as a coordination point for K(+). GTP-binding positions include Asn-225–Ser-230, Ser-244–Thr-250, and Asp-269–Gly-272. A Mg(2+)-binding site is contributed by Ser-229. K(+) is bound by residues Ser-244, Ile-246, and Thr-249. Thr-250 is a binding site for Mg(2+). Lys-445 contributes to the (6S)-5-formyl-5,6,7,8-tetrahydrofolate binding site.

It belongs to the TRAFAC class TrmE-Era-EngA-EngB-Septin-like GTPase superfamily. TrmE GTPase family. In terms of assembly, homodimer. Heterotetramer of two MnmE and two MnmG subunits. K(+) is required as a cofactor.

Its subcellular location is the cytoplasm. In terms of biological role, exhibits a very high intrinsic GTPase hydrolysis rate. Involved in the addition of a carboxymethylaminomethyl (cmnm) group at the wobble position (U34) of certain tRNAs, forming tRNA-cmnm(5)s(2)U34. The sequence is that of tRNA modification GTPase MnmE from Rickettsia rickettsii (strain Iowa).